Reading from the N-terminus, the 256-residue chain is Undecaprenyl-diphosphatase 2 (256 aa).

The next 8 membrane-spanning stretches (helical) occupy residues 1 to 21 (MDIFNAIILGIIEGITEFLPI), 38 to 58 (ATATNQAFGVIIQLAAILAVL), 70 to 90 (LNLWIKVAIAFIPLGIIAFIF), 97 to 117 (LFNVPVVGVMFIVGGVIFLLL), 134 to 154 (VTYKQAIWIGIAQVFALIPGT), 175 to 195 (AEFSFLLGLPVLAAASGYDLL), 208 to 228 (ALAVGFVTSFIVAYFTIKLFI), and 236 to 256 (FVSFGIYRIVFGVILLTIAYV).

Belongs to the UppP family.

It is found in the cell inner membrane. The enzyme catalyses di-trans,octa-cis-undecaprenyl diphosphate + H2O = di-trans,octa-cis-undecaprenyl phosphate + phosphate + H(+). Catalyzes the dephosphorylation of undecaprenyl diphosphate (UPP). Confers resistance to bacitracin. The protein is Undecaprenyl-diphosphatase 2 of Pseudoalteromonas translucida (strain TAC 125).